A 426-amino-acid chain; its full sequence is 4-aminobutyrate aminotransferase GabT (426 aa).

Pyridoxal 5'-phosphate contacts are provided by residues 111 to 112 (GS) and Q242. An N6-(pyridoxal phosphate)lysine modification is found at K268. T297 is a pyridoxal 5'-phosphate binding site.

It belongs to the class-III pyridoxal-phosphate-dependent aminotransferase family. In terms of assembly, homotetramer. Pyridoxal 5'-phosphate is required as a cofactor.

The catalysed reaction is 4-aminobutanoate + 2-oxoglutarate = succinate semialdehyde + L-glutamate. The enzyme catalyses 5-aminopentanoate + 2-oxoglutarate = 5-oxopentanoate + L-glutamate. The protein operates within amino-acid degradation; 4-aminobutanoate degradation. It participates in amino-acid degradation. Its function is as follows. Pyridoxal phosphate-dependent enzyme that catalyzes transamination between primary amines and alpha-keto acids. Catalyzes the transfer of the amino group from gamma-aminobutyrate (GABA) to alpha-ketoglutarate (KG) to yield succinic semialdehyde (SSA) and glutamate. Thereby functions in a GABA degradation pathway that allows some E.coli strains to utilize GABA as a nitrogen source for growth. Also catalyzes the conversion of 5-aminovalerate to glutarate semialdehyde, as part of a L-lysine degradation pathway that proceeds via cadaverine, glutarate and L-2-hydroxyglutarate. The sequence is that of 4-aminobutyrate aminotransferase GabT (gabT) from Escherichia coli (strain K12).